The chain runs to 262 residues: Acyl-[acyl-carrier-protein]--UDP-N-acetylglucosamine O-acyltransferase (262 aa).

The protein belongs to the transferase hexapeptide repeat family. LpxA subfamily. As to quaternary structure, homotrimer.

The protein resides in the cytoplasm. It carries out the reaction a (3R)-hydroxyacyl-[ACP] + UDP-N-acetyl-alpha-D-glucosamine = a UDP-3-O-[(3R)-3-hydroxyacyl]-N-acetyl-alpha-D-glucosamine + holo-[ACP]. It participates in glycolipid biosynthesis; lipid IV(A) biosynthesis; lipid IV(A) from (3R)-3-hydroxytetradecanoyl-[acyl-carrier-protein] and UDP-N-acetyl-alpha-D-glucosamine: step 1/6. Functionally, involved in the biosynthesis of lipid A, a phosphorylated glycolipid that anchors the lipopolysaccharide to the outer membrane of the cell. This chain is Acyl-[acyl-carrier-protein]--UDP-N-acetylglucosamine O-acyltransferase, found in Sodalis glossinidius (strain morsitans).